The sequence spans 66 residues: Large ribosomal subunit protein bL35 (66 aa).

The span at 1–26 (MPKMKTHRGSAKRFKKTGSGKLKRSH) shows a compositional bias: basic residues. A disordered region spans residues 1–45 (MPKMKTHRGSAKRFKKTGSGKLKRSHAYTSHLFANKSQKQKRKLR).

This sequence belongs to the bacterial ribosomal protein bL35 family.

The protein is Large ribosomal subunit protein bL35 of Bacillus velezensis (strain DSM 23117 / BGSC 10A6 / LMG 26770 / FZB42) (Bacillus amyloliquefaciens subsp. plantarum).